Reading from the N-terminus, the 128-residue chain is Small ribosomal subunit protein uS11 (128 aa).

It belongs to the universal ribosomal protein uS11 family. In terms of assembly, part of the 30S ribosomal subunit. Interacts with proteins S7 and S18. Binds to IF-3.

Functionally, located on the platform of the 30S subunit, it bridges several disparate RNA helices of the 16S rRNA. Forms part of the Shine-Dalgarno cleft in the 70S ribosome. In Desulfatibacillum aliphaticivorans, this protein is Small ribosomal subunit protein uS11.